The sequence spans 413 residues: Serine hydroxymethyltransferase (413 aa).

(6S)-5,6,7,8-tetrahydrofolate is bound by residues Leu-117 and 121–123 (GHL). Lys-226 carries the N6-(pyridoxal phosphate)lysine modification. (6S)-5,6,7,8-tetrahydrofolate-binding positions include Glu-241 and 349-351 (SPF).

It belongs to the SHMT family. As to quaternary structure, homodimer. The cofactor is pyridoxal 5'-phosphate.

It localises to the cytoplasm. The catalysed reaction is (6R)-5,10-methylene-5,6,7,8-tetrahydrofolate + glycine + H2O = (6S)-5,6,7,8-tetrahydrofolate + L-serine. Its pathway is one-carbon metabolism; tetrahydrofolate interconversion. The protein operates within amino-acid biosynthesis; glycine biosynthesis; glycine from L-serine: step 1/1. In terms of biological role, catalyzes the reversible interconversion of serine and glycine with tetrahydrofolate (THF) serving as the one-carbon carrier. This reaction serves as the major source of one-carbon groups required for the biosynthesis of purines, thymidylate, methionine, and other important biomolecules. Also exhibits THF-independent aldolase activity toward beta-hydroxyamino acids, producing glycine and aldehydes, via a retro-aldol mechanism. The protein is Serine hydroxymethyltransferase of Halalkalibacterium halodurans (strain ATCC BAA-125 / DSM 18197 / FERM 7344 / JCM 9153 / C-125) (Bacillus halodurans).